Here is a 550-residue protein sequence, read N- to C-terminus: Glucose-6-phosphate isomerase (550 aa).

The active-site Proton donor is the Glu356. Catalysis depends on residues His387 and Lys515.

Belongs to the GPI family.

It is found in the cytoplasm. It catalyses the reaction alpha-D-glucose 6-phosphate = beta-D-fructose 6-phosphate. It functions in the pathway carbohydrate biosynthesis; gluconeogenesis. The protein operates within carbohydrate degradation; glycolysis; D-glyceraldehyde 3-phosphate and glycerone phosphate from D-glucose: step 2/4. Functionally, catalyzes the reversible isomerization of glucose-6-phosphate to fructose-6-phosphate. In Vibrio atlanticus (strain LGP32) (Vibrio splendidus (strain Mel32)), this protein is Glucose-6-phosphate isomerase.